The chain runs to 400 residues: tRNA(Met) cytidine acetate ligase (400 aa).

ATP contacts are provided by residues 7–20 (IVEY…HLYH), G101, N159, and R184.

Belongs to the TmcAL family.

It localises to the cytoplasm. The catalysed reaction is cytidine(34) in elongator tRNA(Met) + acetate + ATP = N(4)-acetylcytidine(34) in elongator tRNA(Met) + AMP + diphosphate. Its function is as follows. Catalyzes the formation of N(4)-acetylcytidine (ac(4)C) at the wobble position of elongator tRNA(Met), using acetate and ATP as substrates. First activates an acetate ion to form acetyladenylate (Ac-AMP) and then transfers the acetyl group to tRNA to form ac(4)C34. The chain is tRNA(Met) cytidine acetate ligase from Caldicellulosiruptor saccharolyticus (strain ATCC 43494 / DSM 8903 / Tp8T 6331).